The chain runs to 810 residues: E3 ubiquitin-protein ligase RNF10 (810 aa).

Positions 1-31 (MPQSSPSAAATASDMDKNSGSSSSSASSGSS) are enriched in low complexity. Residues 1–119 (MPQSSPSAAA…SFNGGRRDEV (119 aa)) form a disordered region. A Phosphoserine modification is found at S5. A compositionally biased stretch (polar residues) spans 76 to 92 (NFINQSRRSNSQKSKTF). Positions 101–185 (GGSSKLFSSS…FNKELFLQAN (85 aa)) are interaction with MEOX2. Low complexity predominate over residues 104–113 (SKLFSSSFNG). 2 positions are modified to phosphoserine: S110 and S128. An RING-type zinc finger spans residues 225–267 (CPICLYPPTAAKITRCGHIFCWACILHYLSLSEKTWSKCPICY). Disordered regions lie at residues 598 to 623 (KRKRQRQKKAREERRRERRIEMEENK), 652 to 674 (DSALGSTSTEGRGALSLSPLSRS), 722 to 759 (ADVWPKTAPKKDENTLGPPAPVDSDGESDNSDRVPVPS), and 775 to 810 (LDTPVTSDPLSEEKGGKKRKKQKQKLLFSTSVVHTK). The segment covering 607–623 (AREERRRERRIEMEENK) has biased composition (basic and acidic residues). A compositionally biased stretch (polar residues) spans 652–661 (DSALGSTSTE). Residues 662 to 674 (GRGALSLSPLSRS) show a composition bias toward low complexity. Basic and acidic residues predominate over residues 722-735 (ADVWPKTAPKKDEN). Residues 801–810 (LFSTSVVHTK) are compositionally biased toward polar residues.

It belongs to the RNF10 family. As to quaternary structure, interacts with MEOX2.

It localises to the cytoplasm. Its subcellular location is the nucleus. The enzyme catalyses S-ubiquitinyl-[E2 ubiquitin-conjugating enzyme]-L-cysteine + [acceptor protein]-L-lysine = [E2 ubiquitin-conjugating enzyme]-L-cysteine + N(6)-ubiquitinyl-[acceptor protein]-L-lysine.. It participates in protein modification; protein ubiquitination. E3 ubiquitin-protein ligase that catalyzes monoubiquitination of 40S ribosomal proteins RPS2/us5 and RPS3/us3 in response to ribosome stalling. Part of a ribosome quality control that takes place when ribosomes have stalled during translation initiation (iRQC): RNF10 acts by mediating monoubiquitination of RPS2/us5 and RPS3/us3, promoting their degradation by the proteasome. Also promotes ubiquitination of 40S ribosomal proteins in response to ribosome stalling during translation elongation. The action of RNF10 in iRQC is counteracted by USP10. May also act as a transcriptional factor involved in the regulation of MAG (Myelin-associated glycoprotein) expression. Acts as a regulator of Schwann cell differentiation and myelination. The sequence is that of E3 ubiquitin-protein ligase RNF10 (RNF10) from Bos taurus (Bovine).